The following is a 229-amino-acid chain: Potassium/proton antiporter CemA (229 aa).

A run of 4 helical transmembrane segments spans residues 7-27 (FTPL…SLSF), 114-134 (ITCF…LVIL), 154-174 (ILLL…ELMI), and 189-209 (IISG…KYWI).

This sequence belongs to the CemA family.

Its subcellular location is the plastid. The protein localises to the chloroplast inner membrane. It carries out the reaction K(+)(in) + H(+)(out) = K(+)(out) + H(+)(in). Functionally, contributes to K(+)/H(+) antiport activity by supporting proton efflux to control proton extrusion and homeostasis in chloroplasts in a light-dependent manner to modulate photosynthesis. Prevents excessive induction of non-photochemical quenching (NPQ) under continuous-light conditions. Indirectly promotes efficient inorganic carbon uptake into chloroplasts. This Platanus occidentalis (Sycamore) protein is Potassium/proton antiporter CemA.